The primary structure comprises 162 residues: Globin CTT-VIIB-7 (162 aa).

A signal peptide spans methionine 1–alanine 16. The Globin domain occupies proline 18–glutamate 162. 2 residues coordinate heme b: histidine 76 and histidine 111.

The protein belongs to the globin family. As to quaternary structure, homodimer.

This Chironomus thummi piger (Midge) protein is Globin CTT-VIIB-7 (CTT-7B7).